The sequence spans 242 residues: MKVSLFITCLSDVFFPQVGRSVVEIMNQCGVELDFPEGQTCCGQPAYNSGYQEDAKLAAKQMIKAFEHSEYIVTPSGSCASMVHHYYKEMFKGDSEWYEKAVHLADRTYELTDFLVNVLGKNDWKSKLVEKAVFHQSCHMSRALGIKEEPLKLLSQVEGLDIKELPYCQDCCGFGGTFAVKMSSISETMVDEKIKHIEATEANLLIGADMGCLMNIGGRLRRKNKNIQVLHVAEVLAKGLNK.

Belongs to the LutA/YkgE family.

Functionally, is involved in L-lactate degradation and allows cells to grow with lactate as the sole carbon source. This chain is Lactate utilization protein A 2, found in Bacillus cereus (strain ZK / E33L).